The chain runs to 618 residues: Chaperone protein HtpG (618 aa).

The a; substrate-binding stretch occupies residues 1–340 (MATKHQFQTE…SEDLPLNVSR (340 aa)). The segment at 341-545 (EILQQNKILA…KEDNNPMMAN (205 aa)) is b. Residues 546–618 (LMAQMGQKVP…ELNSLLLQSL (73 aa)) form a c region.

The protein belongs to the heat shock protein 90 family. Homodimer.

It is found in the cytoplasm. In terms of biological role, molecular chaperone. Has ATPase activity. This chain is Chaperone protein HtpG, found in Helicobacter hepaticus (strain ATCC 51449 / 3B1).